A 252-amino-acid polypeptide reads, in one-letter code: Protein AGAMOUS-LIKE 6 (252 aa).

Residues Met1–Gly61 form the MADS-box domain. Short sequence motifs (nuclear localization signal) lie at residues Leu8 to Ile15 and Gln138 to Met145. A K-box domain is found at Thr85–Ser175.

As to expression, restricted to flowers.

The protein localises to the nucleus. Functionally, probable transcription factor involved in fruit development. Key regulator of the transition between the state of 'ovary arrest' imposed towards anthesis and the fertilization-triggered fruit set. The sequence is that of Protein AGAMOUS-LIKE 6 from Solanum lycopersicum (Tomato).